The following is a 149-amino-acid chain: Large ribosomal subunit protein uL15 (149 aa).

A compositionally biased stretch (basic and acidic residues) spans 1–28 (MVIKIHDLRPAPGSKRDKIRVGRGEGSK). Residues 1-54 (MVIKIHDLRPAPGSKRDKIRVGRGEGSKGKTAGRGTKGTKARKNVSPRFEGGQM) are disordered.

Belongs to the universal ribosomal protein uL15 family. Part of the 50S ribosomal subunit.

Binds to the 23S rRNA. The protein is Large ribosomal subunit protein uL15 of Saccharopolyspora erythraea (strain ATCC 11635 / DSM 40517 / JCM 4748 / NBRC 13426 / NCIMB 8594 / NRRL 2338).